Here is a 98-residue protein sequence, read N- to C-terminus: NADH-ubiquinone oxidoreductase chain 4L (98 aa).

3 helical membrane passes run 1–21 (MSLVYMNIMIAFLTSLLGLLM), 29–49 (SLLCLEGMMLSLFILSTIMIL), and 61–81 (IILLVFAACEAAIGLSLLVMV).

Belongs to the complex I subunit 4L family. Core subunit of respiratory chain NADH dehydrogenase (Complex I) which is composed of 45 different subunits.

The protein resides in the mitochondrion inner membrane. It carries out the reaction a ubiquinone + NADH + 5 H(+)(in) = a ubiquinol + NAD(+) + 4 H(+)(out). Core subunit of the mitochondrial membrane respiratory chain NADH dehydrogenase (Complex I) which catalyzes electron transfer from NADH through the respiratory chain, using ubiquinone as an electron acceptor. Part of the enzyme membrane arm which is embedded in the lipid bilayer and involved in proton translocation. In Mogera wogura (Japanese mole), this protein is NADH-ubiquinone oxidoreductase chain 4L (MT-ND4L).